A 425-amino-acid chain; its full sequence is Protein CLP1 homolog (425 aa).

ATP contacts are provided by residues E18, K59, and 121-126 (DVGKST).

This sequence belongs to the Clp1 family. Clp1 subfamily.

It localises to the nucleus. In terms of biological role, required for endonucleolytic cleavage during polyadenylation-dependent pre-mRNA 3'-end formation. This is Protein CLP1 homolog (cbc) from Drosophila mojavensis (Fruit fly).